Consider the following 317-residue polypeptide: Melanocyte-stimulating hormone receptor (317 aa).

Over 1 to 37 (MPVLGSQRRLLGSLNCTPPATFPLTLAPNRTGPQCLE) the chain is Extracellular. Residue asparagine 29 is glycosylated (N-linked (GlcNAc...) asparagine). Residues 38–63 (VSIPDGLFLSLGLVSLVENVLVVAAI) traverse the membrane as a helical segment. The Cytoplasmic segment spans residues 64 to 72 (AKNRNLHSP). A helical membrane pass occupies residues 73–93 (MYYFICCLAMSDLLVSVSNVL). The Extracellular portion of the chain corresponds to 94-118 (ETAVMLLLEAGALAAQAAVVQQLDN). The helical transmembrane segment at 119–140 (VIDVLICGSMVSSLCFLGAIAV) threads the bilayer. Over 141–163 (DRYISIFYALRYHSVVTLPRAWR) the chain is Cytoplasmic. A helical membrane pass occupies residues 164–183 (IIAAIWVASILTSLLFITYY). Residues 184-191 (NHTVVLLC) lie on the Extracellular side of the membrane. A helical transmembrane segment spans residues 192 to 211 (LVGFFIAMLALMAVLYVHML). Topologically, residues 212 to 240 (ARACQHARGIARLQKRQRPIHQGFGLKGA) are cytoplasmic. The chain crosses the membrane as a helical span at residues 241 to 266 (ATLTILLGVFFLCWGPFFLHLSLIVL). Residues 267–279 (CPQHPTCGCIFKN) are Extracellular-facing. The helical transmembrane segment at 280 to 300 (FNLFLALIICNAIVDPLIYAF) threads the bilayer. At 301 to 317 (RSQELRKTLQEVLQCSW) the chain is on the cytoplasmic side. A lipid anchor (S-palmitoyl cysteine) is attached at cysteine 315.

Belongs to the G-protein coupled receptor 1 family. Interacts with MGRN1, but does not undergo MGRN1-mediated ubiquitination; this interaction competes with GNAS-binding and thus inhibits agonist-induced cAMP production. Interacts with OPN3; the interaction results in a decrease in MC1R-mediated cAMP signaling and ultimately a decrease in melanin production in melanocytes.

It localises to the cell membrane. Its function is as follows. Receptor for MSH (alpha, beta and gamma) and ACTH. The activity of this receptor is mediated by G proteins which activate adenylate cyclase. Mediates melanogenesis, the production of eumelanin (black/brown) and phaeomelanin (red/yellow), via regulation of cAMP signaling in melanocytes. This is Melanocyte-stimulating hormone receptor (MC1R) from Dama dama (Fallow deer).